A 95-amino-acid polypeptide reads, in one-letter code: MSVDLQTVKRVARLARIAVSEEDAERMTGELNAILGFVEQLNEVDVSGVEPMTSVTPMEMKKRQDVVTDGNKAADIVANAPATEENFFLVPKVVE.

Belongs to the GatC family. Heterotrimer of A, B and C subunits.

It carries out the reaction L-glutamyl-tRNA(Gln) + L-glutamine + ATP + H2O = L-glutaminyl-tRNA(Gln) + L-glutamate + ADP + phosphate + H(+). It catalyses the reaction L-aspartyl-tRNA(Asn) + L-glutamine + ATP + H2O = L-asparaginyl-tRNA(Asn) + L-glutamate + ADP + phosphate + 2 H(+). Functionally, allows the formation of correctly charged Asn-tRNA(Asn) or Gln-tRNA(Gln) through the transamidation of misacylated Asp-tRNA(Asn) or Glu-tRNA(Gln) in organisms which lack either or both of asparaginyl-tRNA or glutaminyl-tRNA synthetases. The reaction takes place in the presence of glutamine and ATP through an activated phospho-Asp-tRNA(Asn) or phospho-Glu-tRNA(Gln). The chain is Glutamyl-tRNA(Gln) amidotransferase subunit C from Mesorhizobium japonicum (strain LMG 29417 / CECT 9101 / MAFF 303099) (Mesorhizobium loti (strain MAFF 303099)).